A 317-amino-acid polypeptide reads, in one-letter code: MSDTILRTSATAVPDTALLDQSLLGATAGDWLALLKPRVLYLVVYTGAAGLLVAPGGINPILGFTAILCIAMAAGAAGAINMWYDRDIDAVMRRTAGRPIPTGRISPDGALAYGVALSALSVLLMWLATNLLAAGLLAASIGFYVFIYTMWLKRRTPQNIVIGGAAGAFPPVIGWAAATGHVGLLPVLLFAIIFFWTPPHFWALSLFASADYQKAGVPMLPVVAGQKATRLAVMRYTLWLVPLSLLPYVLHLAGPVYGASAMVLGLAFVWYSWRVLRDRQDGNGVSLTRDAPAKAAFKFSILYLFLIFGALVLDHLV.

8 helical membrane-spanning segments follow: residues 39 to 59 (VLYLVVYTGAAGLLVAPGGIN), 60 to 80 (PILGFTAILCIAMAAGAAGAI), 109 to 129 (GALAYGVALSALSVLLMWLAT), 131 to 151 (LLAAGLLAASIGFYVFIYTMW), 160 to 180 (IVIGGAAGAFPPVIGWAAATG), 184 to 204 (LLPVLLFAIIFFWTPPHFWAL), 249 to 269 (VLHLAGPVYGASAMVLGLAFV), and 297 to 317 (FKFSILYLFLIFGALVLDHLV).

This sequence belongs to the UbiA prenyltransferase family. Protoheme IX farnesyltransferase subfamily.

The protein localises to the cell inner membrane. It catalyses the reaction heme b + (2E,6E)-farnesyl diphosphate + H2O = Fe(II)-heme o + diphosphate. Its pathway is porphyrin-containing compound metabolism; heme O biosynthesis; heme O from protoheme: step 1/1. In terms of biological role, converts heme B (protoheme IX) to heme O by substitution of the vinyl group on carbon 2 of heme B porphyrin ring with a hydroxyethyl farnesyl side group. The chain is Protoheme IX farnesyltransferase from Acidiphilium cryptum (strain JF-5).